Reading from the N-terminus, the 432-residue chain is Argininosuccinate lyase (432 aa).

Belongs to the lyase 1 family. Argininosuccinate lyase subfamily.

It is found in the cytoplasm. It catalyses the reaction 2-(N(omega)-L-arginino)succinate = fumarate + L-arginine. Its pathway is amino-acid biosynthesis; L-arginine biosynthesis; L-arginine from L-ornithine and carbamoyl phosphate: step 3/3. The chain is Argininosuccinate lyase from Xanthomonas axonopodis pv. citri (strain 306).